A 224-amino-acid chain; its full sequence is 7-cyano-7-deazaguanine synthase (224 aa).

Position 9–19 (9–19) interacts with ATP; the sequence is LSGGLDSATVL. Positions 189, 199, 202, and 205 each coordinate Zn(2+).

It belongs to the QueC family. It depends on Zn(2+) as a cofactor.

The enzyme catalyses 7-carboxy-7-deazaguanine + NH4(+) + ATP = 7-cyano-7-deazaguanine + ADP + phosphate + H2O + H(+). Its pathway is purine metabolism; 7-cyano-7-deazaguanine biosynthesis. In terms of biological role, catalyzes the ATP-dependent conversion of 7-carboxy-7-deazaguanine (CDG) to 7-cyano-7-deazaguanine (preQ(0)). This chain is 7-cyano-7-deazaguanine synthase, found in Ralstonia pickettii (strain 12J).